The following is a 1008-amino-acid chain: PWWP domain-containing protein 3 (1008 aa).

Residues 78 to 122 (VSSLLKLKEDVEEEEEEEEEEEEEEEDGEDEEEEEEEEEEEEEEE) are a coiled coil. Residues 84 to 124 (LKEDVEEEEEEEEEEEEEEEDGEDEEEEEEEEEEEEEEEHG) are disordered. Residues 87 to 122 (DVEEEEEEEEEEEEEEEDGEDEEEEEEEEEEEEEEE) are compositionally biased toward acidic residues. The PWWP domain occupies 127-188 (VGDFVWGKIK…ASQLKPFAES (62 aa)). 3 disordered regions span residues 307 to 339 (EYHEPQSVPGLEDKNNDDDDDDEEKNVNDGLQW), 399 to 606 (ETEP…LGQE), and 668 to 874 (NHKF…GPGS). Acidic residues predominate over residues 321–330 (NNDDDDDDEE). Residues 399-409 (ETEPADGDVKS) are compositionally biased toward basic and acidic residues. The segment covering 473–490 (DDGDDDGSGDKEESEEKE) has biased composition (acidic residues). 3 stretches are compositionally biased toward basic and acidic residues: residues 511–522 (RFDDSVVERSTE), 677–687 (SSDKEKEELSE), and 707–725 (QKAEEIEVTGKEENETDKH). The segment covering 726–738 (GKMKKERKRKKSE) has biased composition (basic residues). Composition is skewed to basic and acidic residues over residues 739-758 (SKKEGGEGEETQKEANESTK), 768-787 (SKKQSDGEEETQKEPSESTK), and 794-818 (NPESKKKAEAVEEEETRKESVESTK). 3 short sequence motifs (nuclear localization signal) span residues 786 to 793 (TKKERKRK), 809 to 816 (TRKESVES), and 841 to 848 (EKKKKKKR). Residues 804–824 (VEEEETRKESVESTKKERKRK) adopt a coiled-coil conformation. A compositionally biased stretch (basic residues) spans 842-854 (KKKKKKREGKSKK).

It belongs to the PDP family. Interacts with DEK3. Binds to LHP1, MSI4/FVE and MSI5. Component of the PRC2 (polycomb repressive complex 2) complex which regulates histone methylation on histone H3K27.

Its subcellular location is the nucleus. In terms of biological role, together with PDP1, PDP2 and PDP6, interacts with MSI4/FVE and MSI5 to suppress FLC, MAF4 and MAF5 expression by regulating the function of the PRC2 complex and modulating H3K27me3 level, thereby promoting flowering. The chain is PWWP domain-containing protein 3 from Arabidopsis thaliana (Mouse-ear cress).